The chain runs to 270 residues: Protein-ADP-ribose hydrolase (270 aa).

One can recognise a Macro domain in the interval 73–267 (VSVKDCQKTN…LYDTYLQKEN (195 aa)). ADP-D-ribose contacts are provided by Asp-92, Ile-93, and Asn-106. The Zn(2+) site is built by Cys-112, His-117, and Cys-119. 8 residues coordinate ADP-D-ribose: Cys-119, Ile-120, Asp-121, Ser-212, Thr-213, Gly-214, Glu-215, and Phe-216.

The protein belongs to the MacroD-type family. Zn-Macro subfamily. As to quaternary structure, monomer. Interacts with the lipoylated form of GcvH-L. Zn(2+) is required as a cofactor.

It catalyses the reaction 4-O-(ADP-D-ribosyl)-L-aspartyl-[protein] + H2O = L-aspartyl-[protein] + ADP-D-ribose + H(+). The catalysed reaction is 5-O-(ADP-D-ribosyl)-L-glutamyl-[protein] + H2O = L-glutamyl-[protein] + ADP-D-ribose + H(+). The enzyme catalyses S-(ADP-D-ribosyl)-L-cysteinyl-[protein] + H2O = ADP-D-ribose + L-cysteinyl-[protein]. ADP-ribosylhydrolase that specifically reverses the SirTM-mediated mono-ADP-ribosylation at an asparatate residue of GcvH-L (SpyM50867), by releasing ADP-ribose from the target protein. May play a role in the regulation of the response to host-induced oxidative stress. It can also hydrolyze ADP-ribosyl-glutamate bonds and ADP-ribosyl-cysteine bonds. In vitro, it can remove the ADP-ribosyl modification from the human mono-ADP-ribosylated PARP1 E988Q mutant, which is primarily modified on glutamate site with only minor aspartate contribution. It can also hydrolyze the ADP-ribosyl-cysteinyl glycosidic bond of a Cys-ADP-ribosylated synthetic peptide. In Streptococcus pyogenes serotype M5 (strain Manfredo), this protein is Protein-ADP-ribose hydrolase.